The primary structure comprises 272 residues: Orotidine 5'-phosphate decarboxylase (272 aa).

Lys96 functions as the Proton donor in the catalytic mechanism.

The protein belongs to the OMP decarboxylase family. Type 2 subfamily.

It catalyses the reaction orotidine 5'-phosphate + H(+) = UMP + CO2. The protein operates within pyrimidine metabolism; UMP biosynthesis via de novo pathway; UMP from orotate: step 2/2. In Christiangramia forsetii (strain DSM 17595 / CGMCC 1.15422 / KT0803) (Gramella forsetii), this protein is Orotidine 5'-phosphate decarboxylase.